Consider the following 612-residue polypeptide: Phosphopentomutase (612 aa).

Ala2 is modified (N-acetylalanine). The alpha-D-glucose 1,6-bisphosphate site is built by Arg63 and Ser165. The Phosphoserine intermediate role is filled by Ser165. The Mg(2+) site is built by Ser165, Asp322, Asp324, and Asp326. Ser165 carries the phosphoserine modification. Alpha-D-glucose 1,6-bisphosphate-binding residues include Asp326, Arg327, Thr400, Glu424, and Lys438.

This sequence belongs to the phosphohexose mutase family. As to quaternary structure, monomer. The cofactor is Mg(2+).

It is found in the cytoplasm. The protein localises to the cytosol. The enzyme catalyses alpha-D-ribose 1-phosphate = D-ribose 5-phosphate. It catalyses the reaction 2-deoxy-alpha-D-ribose 1-phosphate = 2-deoxy-D-ribose 5-phosphate. The catalysed reaction is alpha-D-glucose 1-phosphate = alpha-D-glucose 6-phosphate. It carries out the reaction O-phospho-L-seryl-[protein] + alpha-D-glucose 1-phosphate = alpha-D-glucose 1,6-bisphosphate + L-seryl-[protein]. The enzyme catalyses alpha-D-glucose 1,6-bisphosphate + L-seryl-[protein] = O-phospho-L-seryl-[protein] + alpha-D-glucose 6-phosphate. Catalyzes the conversion of the nucleoside breakdown products ribose-1-phosphate and deoxyribose-1-phosphate to the corresponding 5-phosphopentoses. Catalyzes the reversible isomerization of alpha-D-glucose 1-phosphate to alpha-D-glucose 6-phosphate but with a lower catalytic efficiency. The mechanism proceeds via the intermediate compound alpha-D-glucose 1,6-bisphosphate. In vitro, also has a low glucose 1,6-bisphosphate synthase activity which is most probably not physiologically relevant. In Pongo abelii (Sumatran orangutan), this protein is Phosphopentomutase (PGM2).